Here is a 219-residue protein sequence, read N- to C-terminus: Response regulator ArlR (219 aa).

A Response regulatory domain is found at 3–116 (NILIVEDEQN…ELLARIRAVL (114 aa)). Aspartate 52 bears the 4-aspartylphosphate mark. A DNA-binding region (ompR/PhoB-type) is located at residues 122–219 (KDVLDINGII…TVRGVGYVIR (98 aa)).

In terms of processing, phosphorylated by ArlS.

The protein localises to the cytoplasm. Its function is as follows. Member of the two-component regulatory system ArlS/ArlR. This Staphylococcus epidermidis (strain ATCC 35984 / DSM 28319 / BCRC 17069 / CCUG 31568 / BM 3577 / RP62A) protein is Response regulator ArlR (arlR).